Here is a 296-residue protein sequence, read N- to C-terminus: Bifunctional protein FolD (296 aa).

NADP(+) contacts are provided by residues Gly170–Ser172 and Ser195.

This sequence belongs to the tetrahydrofolate dehydrogenase/cyclohydrolase family. Homodimer.

It catalyses the reaction (6R)-5,10-methylene-5,6,7,8-tetrahydrofolate + NADP(+) = (6R)-5,10-methenyltetrahydrofolate + NADPH. It carries out the reaction (6R)-5,10-methenyltetrahydrofolate + H2O = (6R)-10-formyltetrahydrofolate + H(+). Its pathway is one-carbon metabolism; tetrahydrofolate interconversion. Catalyzes the oxidation of 5,10-methylenetetrahydrofolate to 5,10-methenyltetrahydrofolate and then the hydrolysis of 5,10-methenyltetrahydrofolate to 10-formyltetrahydrofolate. The sequence is that of Bifunctional protein FolD from Rhodospirillum rubrum (strain ATCC 11170 / ATH 1.1.1 / DSM 467 / LMG 4362 / NCIMB 8255 / S1).